The sequence spans 207 residues: Large ribosomal subunit protein uL4 (207 aa).

Positions Thr-48–Gly-86 are disordered. Residues Gly-60–Gly-71 show a composition bias toward basic residues.

Belongs to the universal ribosomal protein uL4 family. In terms of assembly, part of the 50S ribosomal subunit.

Functionally, one of the primary rRNA binding proteins, this protein initially binds near the 5'-end of the 23S rRNA. It is important during the early stages of 50S assembly. It makes multiple contacts with different domains of the 23S rRNA in the assembled 50S subunit and ribosome. In terms of biological role, forms part of the polypeptide exit tunnel. The chain is Large ribosomal subunit protein uL4 from Bacillus licheniformis (strain ATCC 14580 / DSM 13 / JCM 2505 / CCUG 7422 / NBRC 12200 / NCIMB 9375 / NCTC 10341 / NRRL NRS-1264 / Gibson 46).